The primary structure comprises 478 residues: MSRFSGALQLTDLDDFITPSQECIKPVKIEANKSKTGSKITIQDDGSYMQATSSGLQKLEKVEITLADCLACSGCITSAEGVLITQQSQEELLKVMNENNLAKLNNQLDAVRFIVFTVAQQPILSLAKRYNLPAEETFERVAGYFRKLGADLVVDTKIADDLALIEGRNEFIERFNTNRQTLPMLASSCPGFVCYAEKTHGSFILPYIASTRSPQQIMGVLVKKYLAKLLGIAADRIYHVTVMPCYDKKLEASREDFFSDVENCRDVDCVITSIEIEQMLDGSGVQALQIVEKAPIDWPWSTGRPPVFVWGHESSGSGGYSEYLFKYAARKLFNVAVDHVEFKNLRNSDLREAVLEQNGEVVLRFAIANGFRNIQNMVQKLKRGKCNYHYIEIMACPSGCLNGGAQIRPTGGQSQRELTAELEALYRSLPASNPENEAVEMVYTTFLDNAGDNNMRKEFLHTSYHPIEKMNTALNIKW.

C23, C69, C72, C75, C189, C245, C396, and C400 together coordinate [4Fe-4S] cluster.

The protein belongs to the NARF family.

Functionally, component of the cytosolic iron-sulfur (Fe/S) protein assembly machinery. Required for maturation of extramitochondrial Fe/S proteins. The chain is Probable cytosolic Fe-S cluster assembly factor CPIJ010948 from Culex quinquefasciatus (Southern house mosquito).